The primary structure comprises 463 residues: ATP-dependent protease ATPase subunit HslU (463 aa).

ATP contacts are provided by residues Val-19, 61–66, Asp-277, Glu-341, and Arg-413; that span reads GVGKTE.

It belongs to the ClpX chaperone family. HslU subfamily. A double ring-shaped homohexamer of HslV is capped on each side by a ring-shaped HslU homohexamer. The assembly of the HslU/HslV complex is dependent on binding of ATP.

Its subcellular location is the cytoplasm. In terms of biological role, ATPase subunit of a proteasome-like degradation complex; this subunit has chaperone activity. The binding of ATP and its subsequent hydrolysis by HslU are essential for unfolding of protein substrates subsequently hydrolyzed by HslV. HslU recognizes the N-terminal part of its protein substrates and unfolds these before they are guided to HslV for hydrolysis. The chain is ATP-dependent protease ATPase subunit HslU from Shouchella clausii (strain KSM-K16) (Alkalihalobacillus clausii).